We begin with the raw amino-acid sequence, 835 residues long: Pre-mRNA-splicing factor SYF1 (835 aa).

10 HAT repeats span residues 7 to 38 (YILD…HWEA), 46 to 77 (RSAR…WFRR), 313 to 348 (ADFD…FEQA), 414 to 456 (EDFD…VYWS), 458 to 494 (KSYE…NEFQ), 517 to 551 (SIID…LLES), 589 to 623 (NNLH…EVME), 628 to 664 (ATKE…FEIH), 707 to 741 (LGPD…LEMS), and 743 to 777 (SDYT…FELE).

It belongs to the crooked-neck family. As to quaternary structure, associated with the spliceosome.

It is found in the nucleus. Functionally, involved in pre-mRNA splicing and cell cycle progression. This is Pre-mRNA-splicing factor SYF1 (SYF1) from Candida glabrata (strain ATCC 2001 / BCRC 20586 / JCM 3761 / NBRC 0622 / NRRL Y-65 / CBS 138) (Yeast).